A 425-amino-acid polypeptide reads, in one-letter code: Adenylosuccinate synthetase (425 aa).

Residues 12 to 18 and 40 to 42 contribute to the GTP site; these read GDEGKGK and GHT. Residue Asp13 is the Proton acceptor of the active site. Residues Asp13 and Gly40 each coordinate Mg(2+). Residues 13–16, 38–41, Thr127, Arg141, Gln222, Thr237, and Arg301 contribute to the IMP site; these read DEGK and NAGH. The Proton donor role is filled by His41. 297-303 lines the substrate pocket; it reads AVTGRPR. GTP contacts are provided by residues Arg303, 329–331, and 411–413; these read KID and SVG.

Belongs to the adenylosuccinate synthetase family. As to quaternary structure, homodimer. Mg(2+) is required as a cofactor.

The protein resides in the cytoplasm. The catalysed reaction is IMP + L-aspartate + GTP = N(6)-(1,2-dicarboxyethyl)-AMP + GDP + phosphate + 2 H(+). The protein operates within purine metabolism; AMP biosynthesis via de novo pathway; AMP from IMP: step 1/2. Its function is as follows. Plays an important role in the de novo pathway of purine nucleotide biosynthesis. Catalyzes the first committed step in the biosynthesis of AMP from IMP. This is Adenylosuccinate synthetase from Fusobacterium nucleatum subsp. nucleatum (strain ATCC 25586 / DSM 15643 / BCRC 10681 / CIP 101130 / JCM 8532 / KCTC 2640 / LMG 13131 / VPI 4355).